Here is a 68-residue protein sequence, read N- to C-terminus: Neuronal regeneration-related protein (68 aa).

The polypeptide is Neuronal regeneration-related protein (NREP) (Gallus gallus (Chicken)).